The chain runs to 390 residues: Serine/threonine/tyrosine-protein kinase HT1 (390 aa).

The 274-residue stretch at 86-359 folds into the Protein kinase domain; sequence LFIGNKFASG…GLPLTSHASL (274 aa). Residues 92 to 100 and Lys-113 contribute to the ATP site; that span reads FASGAHSRI. Residue Asp-212 is the Proton acceptor of the active site.

The protein belongs to the protein kinase superfamily. Ser/Thr protein kinase family. Interacts with DTX56. Binds to MPK4 and MPK12. Associates to CBC1 and CBC2. In terms of processing, autophosphorylated. Mainly localizes in guard cells. Expressed at low level in leaves, stems, roots and flowers.

The protein localises to the cell membrane. The catalysed reaction is L-seryl-[protein] + ATP = O-phospho-L-seryl-[protein] + ADP + H(+). It catalyses the reaction L-threonyl-[protein] + ATP = O-phospho-L-threonyl-[protein] + ADP + H(+). The enzyme catalyses L-tyrosyl-[protein] + ATP = O-phospho-L-tyrosyl-[protein] + ADP + H(+). With respect to regulation, inhibited by MPK4 and MPK12. Its function is as follows. Serine/threonine/tyrosine kinase involved in the control of stomatal movement in response to CO(2). Functions as a major negative regulator of CO(2)-induced stomatal closing. Does not seem to be involved in stomatal closure in response to abscisic acid (ABA) or light. Involved in the control of red light-induced stomatal opening. Is epistatic to SRK2E/OST1 function during stomatal responses to red light and altered CO(2). Phosphorylates SRK2E/OST1 and GHR1 to prevents SRK2E/OST1- and GHR1-induced activation of SLAC1, thus preventing stomatal closure. Mediates the phosphorylation of CBC1 and CBC2. This chain is Serine/threonine/tyrosine-protein kinase HT1, found in Arabidopsis thaliana (Mouse-ear cress).